Here is a 1415-residue protein sequence, read N- to C-terminus: DNA-directed RNA polymerase subunit beta' (1415 aa).

4 residues coordinate Zn(2+): Cys-72, Cys-74, Cys-87, and Cys-90. The Mg(2+) site is built by Asp-463, Asp-465, and Asp-467. Cys-811, Cys-885, Cys-892, and Cys-895 together coordinate Zn(2+).

This sequence belongs to the RNA polymerase beta' chain family. As to quaternary structure, the RNAP catalytic core consists of 2 alpha, 1 beta, 1 beta' and 1 omega subunit. When a sigma factor is associated with the core the holoenzyme is formed, which can initiate transcription. It depends on Mg(2+) as a cofactor. Zn(2+) is required as a cofactor.

The catalysed reaction is RNA(n) + a ribonucleoside 5'-triphosphate = RNA(n+1) + diphosphate. Its function is as follows. DNA-dependent RNA polymerase catalyzes the transcription of DNA into RNA using the four ribonucleoside triphosphates as substrates. This Cereibacter sphaeroides (strain ATCC 17023 / DSM 158 / JCM 6121 / CCUG 31486 / LMG 2827 / NBRC 12203 / NCIMB 8253 / ATH 2.4.1.) (Rhodobacter sphaeroides) protein is DNA-directed RNA polymerase subunit beta'.